The following is a 274-amino-acid chain: Shikimate dehydrogenase (NADP(+)) (274 aa).

Residues 14–16 (SKS) and Thr-61 each bind shikimate. Residue Lys-65 is the Proton acceptor of the active site. Residues Asn-86 and Asp-102 each contribute to the shikimate site. NADP(+) is bound by residues 126–130 (GAGGA), 150–155 (NRTAEK), and Met-214. Tyr-216 lines the shikimate pocket. Gly-239 is an NADP(+) binding site.

The protein belongs to the shikimate dehydrogenase family. Homodimer.

The enzyme catalyses shikimate + NADP(+) = 3-dehydroshikimate + NADPH + H(+). It participates in metabolic intermediate biosynthesis; chorismate biosynthesis; chorismate from D-erythrose 4-phosphate and phosphoenolpyruvate: step 4/7. Involved in the biosynthesis of the chorismate, which leads to the biosynthesis of aromatic amino acids. Catalyzes the reversible NADPH linked reduction of 3-dehydroshikimate (DHSA) to yield shikimate (SA). In Pseudoalteromonas translucida (strain TAC 125), this protein is Shikimate dehydrogenase (NADP(+)).